A 134-amino-acid polypeptide reads, in one-letter code: Large ribosomal subunit protein bL20 (134 aa).

The protein belongs to the bacterial ribosomal protein bL20 family.

Binds directly to 23S ribosomal RNA and is necessary for the in vitro assembly process of the 50S ribosomal subunit. It is not involved in the protein synthesizing functions of that subunit. This chain is Large ribosomal subunit protein bL20, found in Rhizobium meliloti (strain 1021) (Ensifer meliloti).